Consider the following 276-residue polypeptide: MGIKVYKPTTNGRRNMTGSDFAEITTSTPEKSLLVSMSKTAGRNNTGRITVRHHGGGHKRKYRVIDFKRTTDNVVAKVATIEYDPNRTANIALIVYSNGVKSYILAPKGLEVGMTVVSGPEADIKVGNALPLANIPVGTLIHNIELKPGKGGQLVRSAGASAQVLGSEGKYTLVRLQSGEVRMILSTCRATIGVVGNEQQSLINLGKAGRTRHMGIRPTVRGSVMNPNDHPHGGGEGRQPVGRKSPMTPWGKPALGLKTRNKKAKSSKLIVRRIND.

Residues 219 to 268 (TVRGSVMNPNDHPHGGGEGRQPVGRKSPMTPWGKPALGLKTRNKKAKSSK) form a disordered region.

Belongs to the universal ribosomal protein uL2 family. In terms of assembly, part of the 50S ribosomal subunit. Forms a bridge to the 30S subunit in the 70S ribosome.

In terms of biological role, one of the primary rRNA binding proteins. Required for association of the 30S and 50S subunits to form the 70S ribosome, for tRNA binding and peptide bond formation. It has been suggested to have peptidyltransferase activity; this is somewhat controversial. Makes several contacts with the 16S rRNA in the 70S ribosome. The protein is Large ribosomal subunit protein uL2 of Lactococcus lactis subsp. lactis (strain IL1403) (Streptococcus lactis).